Consider the following 673-residue polypeptide: MLLLEHESKALLEKYGIKTAKCIFCETEEQAVKAAKEIGFPVVMKVAGREIVHKSDVGGVILNVKSEDEVREVFQRLMSIPKAEGVNIQPQLEKGIEVIVGVAENEQFGSVAMFGLGGVFVEVLKDVSFRLLPLTRRDAEEMVREVKGYKLLEGYRRVKGDVGAVVDLLLKLNEVVERESIVEMDLNPVFVYERGAVVADARIVVGERKRFDYTIPDLRDLFYPKSVAVIGASRTVGKPGFNIVWNLKQNGFMGKIYPVNPNADKILELKCYPSILDIPDEVDMAIIAVPAKIVPEVMAECAQKGIKGAVIVSSGFSEEGEKGAEYERRVLEIAKKHGIRIFGPNTTGVLNTENGFITSFAIQPVIKKGNIGIIAQTGLFLGIMMDIVTSNHPSIGFSKIVGMGNKIDVEDYEVLDFLLKDEQTKVIGIYMEGIKNGRAFYDVASSAEKPIVVFKSGRTEYGQKAAMSHTASICGDDDVFDAVCRQANLVRVYSFDELFDVTKAFSLQPLPKGDRVAIIHYTGSGCVQGSDAAYFAGLKLAEFSKDTVDKISEVTPEWHNVNNPIDIWPMVEYYGAFKAYQTAIEAVMEDEGVDSVIACVWANRLINADFEPDYKSLKKYGKPIYFCVEGARDVVFDHKNALELNGIPVYTNVINAVNVLGKVTKYAKRRIQS.

The 37-residue stretch at 9–45 folds into the ATP-grasp domain; the sequence is KALLEKYGIKTAKCIFCETEEQAVKAAKEIGFPVVMK. Position 35 to 46 (35 to 46) interacts with ATP; sequence AKEIGFPVVMKV.

In the N-terminal section; belongs to the acetate CoA ligase beta subunit family. This sequence in the C-terminal section; belongs to the acetate CoA ligase alpha subunit family. As to quaternary structure, homodimer.

It catalyses the reaction acetate + ATP + CoA = acetyl-CoA + ADP + phosphate. Its activity is regulated as follows. Activity requires divalent metal cations. Catalyzes the reversible conversion of a variety of acids to the corresponding acyl-CoA esters. Shows the highest activity with the aryl acids, indoleacetate and phenylacetate, as compared to acetate. In the reverse direction, phenylacetyl-CoA is the best substrate. Seems to be involved primarily in the degradation of aryl-CoA esters to the corresponding acids. Participates in the degradation of branched-chain amino acids via branched-chain-acyl-CoA esters. This is Acetate--CoA ligase [ADP-forming] II from Archaeoglobus fulgidus (strain ATCC 49558 / DSM 4304 / JCM 9628 / NBRC 100126 / VC-16).